A 370-amino-acid polypeptide reads, in one-letter code: Probable dual-specificity RNA methyltransferase RlmN (370 aa).

Glutamate 91 functions as the Proton acceptor in the catalytic mechanism. Positions glutamine 97–arginine 329 constitute a Radical SAM core domain. Cysteine 104 and cysteine 340 are oxidised to a cystine. 3 residues coordinate [4Fe-4S] cluster: cysteine 111, cysteine 115, and cysteine 118. S-adenosyl-L-methionine is bound by residues glycine 163 to glutamate 164, serine 195, serine 218 to histidine 220, and asparagine 296. Cysteine 340 functions as the S-methylcysteine intermediate in the catalytic mechanism.

This sequence belongs to the radical SAM superfamily. RlmN family. [4Fe-4S] cluster serves as cofactor.

It localises to the cytoplasm. The enzyme catalyses adenosine(2503) in 23S rRNA + 2 reduced [2Fe-2S]-[ferredoxin] + 2 S-adenosyl-L-methionine = 2-methyladenosine(2503) in 23S rRNA + 5'-deoxyadenosine + L-methionine + 2 oxidized [2Fe-2S]-[ferredoxin] + S-adenosyl-L-homocysteine. It carries out the reaction adenosine(37) in tRNA + 2 reduced [2Fe-2S]-[ferredoxin] + 2 S-adenosyl-L-methionine = 2-methyladenosine(37) in tRNA + 5'-deoxyadenosine + L-methionine + 2 oxidized [2Fe-2S]-[ferredoxin] + S-adenosyl-L-homocysteine. Functionally, specifically methylates position 2 of adenine 2503 in 23S rRNA and position 2 of adenine 37 in tRNAs. The chain is Probable dual-specificity RNA methyltransferase RlmN from Streptococcus suis (strain 98HAH33).